A 62-amino-acid polypeptide reads, in one-letter code: MHCLPIFVILLLLTASGPSVDAQLKTKDDVPLSSFRDHAKSTLRRLQDKQTCCGYRMCVPCG.

Positions 1–22 (MHCLPIFVILLLLTASGPSVDA) are cleaved as a signal peptide. Residues 23–47 (QLKTKDDVPLSSFRDHAKSTLRRLQ) constitute a propeptide that is removed on maturation. 2 disulfides stabilise this stretch: Cys-52-Cys-58 and Cys-53-Cys-61. Pro-60 bears the 4-hydroxyproline mark. Cys-61 carries the post-translational modification Cysteine amide.

This sequence belongs to the conotoxin A superfamily. As to expression, expressed by the venom duct.

Its subcellular location is the secreted. In Conus textile (Cloth-of-gold cone), this protein is Conotoxin TxIC.